We begin with the raw amino-acid sequence, 900 residues long: Translation initiation factor IF-2 (900 aa).

The interval 48 to 310 (HLNRDRGNAP…KPSSLQQSFN (263 aa)) is disordered. The segment covering 68–82 (STLNVPSTGGKSKSV) has biased composition (polar residues). Composition is skewed to basic and acidic residues over residues 85-98 (EVRK…RDPI) and 108-164 (QARR…KEKV). The span at 165–176 (TNQQNENMTKPA) shows a compositional bias: polar residues. Residues 177–237 (QSEKAKREAE…SATKPEESAD (61 aa)) show a composition bias toward basic and acidic residues. A compositionally biased stretch (basic residues) spans 263-277 (TRTRAAKVTKQKKGN). The span at 278 to 291 (RQSESKADREEARA) shows a compositional bias: basic and acidic residues. The tr-type G domain occupies 399–568 (FRAPVVTIMG…LLQAEVLELK (170 aa)). A G1 region spans residues 408–415 (GHVDHGKT). Residue 408-415 (GHVDHGKT) participates in GTP binding. Residues 433-437 (GITQH) form a G2 region. The segment at 454–457 (DTPG) is G3. GTP-binding positions include 454–458 (DTPGH) and 508–511 (NKID). The G4 stretch occupies residues 508–511 (NKID). Residues 544–546 (SAK) are G5.

The protein belongs to the TRAFAC class translation factor GTPase superfamily. Classic translation factor GTPase family. IF-2 subfamily.

The protein localises to the cytoplasm. Functionally, one of the essential components for the initiation of protein synthesis. Protects formylmethionyl-tRNA from spontaneous hydrolysis and promotes its binding to the 30S ribosomal subunits. Also involved in the hydrolysis of GTP during the formation of the 70S ribosomal complex. In Pectobacterium atrosepticum (strain SCRI 1043 / ATCC BAA-672) (Erwinia carotovora subsp. atroseptica), this protein is Translation initiation factor IF-2.